Reading from the N-terminus, the 305-residue chain is NDP-polyphosphate phosphotransferase 1 (305 aa).

This sequence belongs to the polyphosphate kinase 2 (PPK2) family. Class I subfamily.

The enzyme catalyses [phosphate](n) + ATP = [phosphate](n+1) + ADP. It catalyses the reaction [phosphate](n) + CTP = [phosphate](n+1) + CDP. The catalysed reaction is [phosphate](n) + GTP = [phosphate](n+1) + GDP. It carries out the reaction [phosphate](n) + UTP = [phosphate](n+1) + UDP. With respect to regulation, shows little dependence on metals. Uses inorganic polyphosphate (polyP) as a donor to convert NDP to NTP. PolyP hydrolysis is slightly faster with GDP, but it can also use ADP, CDP and UDP. The polypeptide is NDP-polyphosphate phosphotransferase 1 (Ruegeria pomeroyi (strain ATCC 700808 / DSM 15171 / DSS-3) (Silicibacter pomeroyi)).